Consider the following 591-residue polypeptide: CTP synthase 1 (591 aa).

Residues 300-554 (SIALVGKYTK…LAAAGRLQSY (255 aa)) form the Glutamine amidotransferase type-1 domain. Active-site for GATase activity residues include Cys-399, His-526, and Glu-528. Phosphoserine is present on residues Ser-571 and Ser-575.

Belongs to the CTP synthase family.

The catalysed reaction is UTP + L-glutamine + ATP + H2O = CTP + L-glutamate + ADP + phosphate + 2 H(+). It participates in pyrimidine metabolism; CTP biosynthesis via de novo pathway; CTP from UDP: step 2/2. Functionally, this enzyme is involved in the de novo synthesis of CTP, a precursor of DNA, RNA and phospholipids. Catalyzes the ATP-dependent amination of UTP to CTP with either L-glutamine or ammonia as a source of nitrogen. This Danio rerio (Zebrafish) protein is CTP synthase 1 (ctps1).